The following is a 309-amino-acid chain: Solute carrier family 25 member 48 (309 aa).

Solcar repeat units lie at residues 3-86, 99-209, and 218-305; these read VFQL…TQRL, CSML…FCNW, and PPPC…SLQF. Helical transmembrane passes span 9 to 29, 61 to 81, 105 to 125, 186 to 206, 218 to 238, and 281 to 299; these read FLAG…LDTV, GLSF…GFFS, TVAS…VDLV, GAMI…YTLF, PPPC…WVTA, and ATVN…FLGY.

The protein belongs to the mitochondrial carrier (TC 2.A.29) family.

The protein localises to the mitochondrion inner membrane. This is Solute carrier family 25 member 48 (slc25a48) from Danio rerio (Zebrafish).